A 598-amino-acid chain; its full sequence is Aspartate--tRNA ligase (598 aa).

An L-aspartate-binding site is contributed by glutamate 182. Residues 206-209 are aspartate; sequence QLFK. Arginine 228 provides a ligand contact to L-aspartate. Residues 228 to 230 and glutamine 237 contribute to the ATP site; that span reads RDE. Histidine 456 provides a ligand contact to L-aspartate. Glutamate 490 contributes to the ATP binding site. Arginine 497 provides a ligand contact to L-aspartate. ATP is bound at residue 542–545; it reads GVDR.

Belongs to the class-II aminoacyl-tRNA synthetase family. Type 1 subfamily. As to quaternary structure, homodimer.

The protein localises to the cytoplasm. The catalysed reaction is tRNA(Asp) + L-aspartate + ATP = L-aspartyl-tRNA(Asp) + AMP + diphosphate. In terms of biological role, catalyzes the attachment of L-aspartate to tRNA(Asp) in a two-step reaction: L-aspartate is first activated by ATP to form Asp-AMP and then transferred to the acceptor end of tRNA(Asp). This chain is Aspartate--tRNA ligase, found in Agathobacter rectalis (strain ATCC 33656 / DSM 3377 / JCM 17463 / KCTC 5835 / VPI 0990) (Eubacterium rectale).